A 130-amino-acid chain; its full sequence is Protein NrdI (130 aa).

It belongs to the NrdI family.

Its function is as follows. Probably involved in ribonucleotide reductase function. In Staphylococcus carnosus (strain TM300), this protein is Protein NrdI.